Here is a 914-residue protein sequence, read N- to C-terminus: Chitin synthase B (914 aa).

Disordered stretches follow at residues 1-67 (MAYQ…TSGY) and 112-140 (YARS…GGGL). The segment covering 130 to 140 (GGAGSGGGGGL) has biased composition (gly residues). 7 consecutive transmembrane segments (helical) span residues 543–562 (WLNG…GRMY), 586–606 (ILTW…MDLV), 627–647 (IVNT…FILA), 662–682 (SFVV…YLVV), 712–732 (AGII…ASFM), 843–863 (LVTF…SDGV), and 882–902 (ALLW…CWFL).

Belongs to the chitin synthase family. Class III subfamily.

It localises to the cell membrane. The catalysed reaction is [(1-&gt;4)-N-acetyl-beta-D-glucosaminyl](n) + UDP-N-acetyl-alpha-D-glucosamine = [(1-&gt;4)-N-acetyl-beta-D-glucosaminyl](n+1) + UDP + H(+). Functionally, polymerizes chitin, a structural polymer of the cell wall and septum, by transferring the sugar moiety of UDP-GlcNAc to the non-reducing end of the growing chitin polymer. Plays an important role in septal growth or maintenance. Mediates colony spore formation. The sequence is that of Chitin synthase B from Aspergillus niger (strain ATCC MYA-4892 / CBS 513.88 / FGSC A1513).